Consider the following 480-residue polypeptide: Ribosomal RNA small subunit methyltransferase F (480 aa).

S-adenosyl-L-methionine is bound by residues 126-132, glutamate 150, aspartate 177, and aspartate 195; that span reads AAAPGSK. Cysteine 248 acts as the Nucleophile in catalysis.

Belongs to the class I-like SAM-binding methyltransferase superfamily. RsmB/NOP family.

It is found in the cytoplasm. The enzyme catalyses cytidine(1407) in 16S rRNA + S-adenosyl-L-methionine = 5-methylcytidine(1407) in 16S rRNA + S-adenosyl-L-homocysteine + H(+). In terms of biological role, specifically methylates the cytosine at position 1407 (m5C1407) of 16S rRNA. This is Ribosomal RNA small subunit methyltransferase F from Cronobacter sakazakii (strain ATCC BAA-894) (Enterobacter sakazakii).